A 178-amino-acid polypeptide reads, in one-letter code: Ribulose bisphosphate carboxylase small subunit, chloroplastic 4 (178 aa).

The N-terminal 54 residues, 1–54 (MASISSTVATVSRAAPAQANMVAPFTGLKSNAAFPATKKANDFSTLPSNGGRVQ), are a transit peptide targeting the chloroplast.

This sequence belongs to the RuBisCO small chain family. As to quaternary structure, heterohexadecamer of 8 large and 8 small subunits.

It localises to the plastid. Its subcellular location is the chloroplast. In terms of biological role, ruBisCO catalyzes two reactions: the carboxylation of D-ribulose 1,5-bisphosphate, the primary event in carbon dioxide fixation, as well as the oxidative fragmentation of the pentose substrate. Both reactions occur simultaneously and in competition at the same active site. Although the small subunit is not catalytic it is essential for maximal activity. The protein is Ribulose bisphosphate carboxylase small subunit, chloroplastic 4 of Flaveria pringlei.